We begin with the raw amino-acid sequence, 72 residues long: UPF0337 protein bsl2407 (72 aa).

A disordered region spans residues 1–55 (MGSTTDKIKGNANEAIGKAKQGIGEATGSDRLKGEGVVQEVKGKGQQAMGDAKDA). Positions 35–47 (EGVVQEVKGKGQQ) are enriched in low complexity.

Belongs to the UPF0337 (CsbD) family.

This is UPF0337 protein bsl2407 from Bradyrhizobium diazoefficiens (strain JCM 10833 / BCRC 13528 / IAM 13628 / NBRC 14792 / USDA 110).